The following is a 168-amino-acid chain: Lipid transfer protein EARLI 1 (168 aa).

Residues 1–25 form the signal peptide; it reads MASKNSASIALFFALNIIFFTLTAA. Positions 32–81 are disordered; that stretch reads PSPKHKPVPSPKPKPVPSPKPKPVPSPSVPSPSVPSPNPRPVTPPRTPGS. Residues 34-41 form an A-1 repeat; sequence PKHKPVPS. Residues 34–57 are 3 X 8 AA repeats A of P-K-[HP]-K-P-V-P-S; that stretch reads PKHKPVPSPKPKPVPSPKPKPVPS. The segment covering 39–78 has biased composition (pro residues); that stretch reads VPSPKPKPVPSPKPKPVPSPSVPSPSVPSPNPRPVTPPRT. Residues 42-49 form an A-2 repeat; sequence PKPKPVPS. The A-3 repeat unit spans residues 50-57; the sequence is PKPKPVPS. The B-1 repeat unit spans residues 58–62; it reads PSVPS. Residues 58-67 form a 2 X 58 AA tandem repeats B of P-S-V-P-S region; it reads PSVPSPSVPS. The stretch at 63–67 is one B-2 repeat; it reads PSVPS.

The protein belongs to the plant LTP family. PEARLI1 subfamily. As to expression, mostly expressed in aerial part of seedlings, and, to a lower extent, in roots. Higher basal levels in early-flowering ecotypes.

The protein localises to the secreted. The protein resides in the cell wall. Probable lipid transfer protein (LTP). May improve freezing survival. Seems to control the flowering process and lignin synthesis. Has an auxiliary role for germinability and early seedling development under low temperature and salt stress conditions, probably in an abscisic acid- (ABA) dependent manner. Confers resistance to Botrytis cinerea and exhibits anti-fungal activity, at least against S.cerevisiae, B.cinerea and Fusarium oxysporum, probably by increasing their membrane permeability. This Arabidopsis thaliana (Mouse-ear cress) protein is Lipid transfer protein EARLI 1 (EARLI1).